A 151-amino-acid chain; its full sequence is Deoxyuridine 5'-triphosphate nucleotidohydrolase (151 aa).

Substrate is bound by residues 70–72 (RSG), asparagine 83, 87–89 (LID), and methionine 97.

This sequence belongs to the dUTPase family. Requires Mg(2+) as cofactor.

The enzyme catalyses dUTP + H2O = dUMP + diphosphate + H(+). The protein operates within pyrimidine metabolism; dUMP biosynthesis; dUMP from dCTP (dUTP route): step 2/2. In terms of biological role, this enzyme is involved in nucleotide metabolism: it produces dUMP, the immediate precursor of thymidine nucleotides and it decreases the intracellular concentration of dUTP so that uracil cannot be incorporated into DNA. The chain is Deoxyuridine 5'-triphosphate nucleotidohydrolase from Glaesserella parasuis serovar 5 (strain SH0165) (Haemophilus parasuis).